A 425-amino-acid chain; its full sequence is Sodium-dependent glucose transporter 1A (425 aa).

Transmembrane regions (helical) follow at residues 35–55 (LIFV…GVLF), 61–81 (FFLL…IPFC), 84–104 (AVLL…VDTG), 123–143 (ALHF…KLAW), 183–203 (WAYA…FGLF), 228–248 (ALLC…ITYG), 271–291 (SIFW…ATFL), 294–314 (GTMI…LVLF), 320–340 (CLWI…PSGI), 355–375 (AFFV…IGIL), and 382–402 (LPVV…LFPV).

Belongs to the major facilitator superfamily.

The protein resides in the apical cell membrane. May function as a sodium-dependent glucose transporter. Potential channels for urea in the inner medulla of kidney. The polypeptide is Sodium-dependent glucose transporter 1A (Mus musculus (Mouse)).